Reading from the N-terminus, the 135-residue chain is Succinate dehydrogenase assembly factor 3, mitochondrial (135 aa).

The disordered stretch occupies residues 73-101 (KENSNNNDNYNNNNNDNNNDNNNFINIGQ). The span at 75-95 (NSNNNDNYNNNNNDNNNDNNN) shows a compositional bias: low complexity.

It belongs to the complex I LYR family. SDHAF3 subfamily. As to quaternary structure, interacts with the iron-sulfur protein subunit within the SDH catalytic dimer.

It localises to the mitochondrion matrix. Plays an essential role in the assembly of succinate dehydrogenase (SDH), an enzyme complex (also referred to as respiratory complex II) that is a component of both the tricarboxylic acid (TCA) cycle and the mitochondrial electron transport chain, and which couples the oxidation of succinate to fumarate with the reduction of ubiquinone (coenzyme Q) to ubiquinol. Promotes maturation of the iron-sulfur protein subunit of the SDH catalytic dimer, protecting it from the deleterious effects of oxidants. May act together with SDHAF1. In Dictyostelium discoideum (Social amoeba), this protein is Succinate dehydrogenase assembly factor 3, mitochondrial (acn9).